The primary structure comprises 444 residues: Tubulin beta chain (444 aa).

GTP contacts are provided by glutamine 11, glutamate 68, serine 137, glycine 141, threonine 142, glycine 143, asparagine 203, and asparagine 225. Glutamate 68 is a Mg(2+) binding site. The tract at residues 424 to 444 (QDATAEEEGEFDEDEEMDEMM) is disordered. Over residues 427 to 444 (TAEEEGEFDEDEEMDEMM) the composition is skewed to acidic residues.

The protein belongs to the tubulin family. Dimer of alpha and beta chains. A typical microtubule is a hollow water-filled tube with an outer diameter of 25 nm and an inner diameter of 15 nM. Alpha-beta heterodimers associate head-to-tail to form protofilaments running lengthwise along the microtubule wall with the beta-tubulin subunit facing the microtubule plus end conferring a structural polarity. Microtubules usually have 13 protofilaments but different protofilament numbers can be found in some organisms and specialized cells. Mg(2+) serves as cofactor.

It localises to the cytoplasm. The protein resides in the cytoskeleton. In terms of biological role, tubulin is the major constituent of microtubules, a cylinder consisting of laterally associated linear protofilaments composed of alpha- and beta-tubulin heterodimers. Microtubules grow by the addition of GTP-tubulin dimers to the microtubule end, where a stabilizing cap forms. Below the cap, tubulin dimers are in GDP-bound state, owing to GTPase activity of alpha-tubulin. This chain is Tubulin beta chain, found in Achlya klebsiana.